Consider the following 474-residue polypeptide: MSIKVTQEKLPASRVGLQIEVSGEQSRQVYERTLTRLSREVRFPGFRPGKVPRPVLIQRLGETALKANAIEDLVQQSLESAIAQESIPAIGNYQLSSDFETLVAAFQPGESFSFEASVDVQPTATLAQYTGLTVEVAEVPFDANRVDNVLAEQQKQMATLVPVEGRNAAIGDVAVIDFQGILVESGEEIPGGSGTDFQIEVEEDRFIPGFISGIVGMAIEETRTVDATFPETYAQEEVAGKAAQFTITLKELKTRDLPELDDAFAQEASQYETIEELKTALTERFQAEHESEVKASKRDAILTALADQLDVEIPESLLQREISAMINETASRLSGQGMDVRKLFTEEVLERLRENSKDEAEQRLRRTIALGELAKVTETQVDDEAVKARAAELLSNYPRPQEIDRDRLNTVVREELLEDKLLEWFEANNSVTFVAPKAAETEVDAASATVETTATETAEEAPEAPKAKKGKKKA.

The PPIase FKBP-type domain maps to 171-258 (GDVAVIDFQG…LKELKTRDLP (88 aa)). The interval 441-474 (TEVDAASATVETTATETAEEAPEAPKAKKGKKKA) is disordered. Over residues 444–456 (DAASATVETTATE) the composition is skewed to low complexity.

The protein belongs to the FKBP-type PPIase family. Tig subfamily.

The protein resides in the cytoplasm. It carries out the reaction [protein]-peptidylproline (omega=180) = [protein]-peptidylproline (omega=0). Its function is as follows. Involved in protein export. Acts as a chaperone by maintaining the newly synthesized protein in an open conformation. Functions as a peptidyl-prolyl cis-trans isomerase. This chain is Trigger factor, found in Synechococcus elongatus (strain ATCC 33912 / PCC 7942 / FACHB-805) (Anacystis nidulans R2).